A 109-amino-acid polypeptide reads, in one-letter code: Tyrosine-protein phosphatase 4 (109 aa).

Residues Ser-1 to Ile-109 form the Tyrosine-protein phosphatase domain. Glu-78 contributes to the substrate binding site.

The protein belongs to the protein-tyrosine phosphatase family.

It carries out the reaction O-phospho-L-tyrosyl-[protein] + H2O = L-tyrosyl-[protein] + phosphate. This is Tyrosine-protein phosphatase 4 (STY-4) from Styela plicata (Wrinkled sea squirt).